The sequence spans 317 residues: MHNYLDFEKPISDLEGKIIELKKLATEDESIDTTDEIGRLEVRVREAIVEIYSKLNPWQKTQVARHPQRPHFVDYAKTLFQEFTPLAGDRKFSEDAAIQAGLARFRGQPVAVIGQEKGNDTKSRLKHNFGSPRPEGYRKAIRILEMADRFGLPVISLVDTAGAYPGVGAEERGQAEAIARSTEMCLGVKVPLVSVVIGEGGSGGAIAIATGNKVYMLEHSIYSVISPEGAASILWRDSTRAREAATNMKITAEDLKSLGVIDGIISEPLGGAHRDPDSVIAATGDVIASALAEMAPRSGEQLRNDRRQKFLAMGRNL.

The 254-residue stretch at 40–293 folds into the CoA carboxyltransferase C-terminal domain; that stretch reads LEVRVREAIV…GDVIASALAE (254 aa).

Belongs to the AccA family. In terms of assembly, acetyl-CoA carboxylase is a heterohexamer composed of biotin carboxyl carrier protein (AccB), biotin carboxylase (AccC) and two subunits each of ACCase subunit alpha (AccA) and ACCase subunit beta (AccD).

The protein localises to the cytoplasm. The catalysed reaction is N(6)-carboxybiotinyl-L-lysyl-[protein] + acetyl-CoA = N(6)-biotinyl-L-lysyl-[protein] + malonyl-CoA. Its pathway is lipid metabolism; malonyl-CoA biosynthesis; malonyl-CoA from acetyl-CoA: step 1/1. Functionally, component of the acetyl coenzyme A carboxylase (ACC) complex. First, biotin carboxylase catalyzes the carboxylation of biotin on its carrier protein (BCCP) and then the CO(2) group is transferred by the carboxyltransferase to acetyl-CoA to form malonyl-CoA. The polypeptide is Acetyl-coenzyme A carboxylase carboxyl transferase subunit alpha (Rhizobium johnstonii (strain DSM 114642 / LMG 32736 / 3841) (Rhizobium leguminosarum bv. viciae)).